The sequence spans 182 residues: UPF0316 protein BCB4264_A3368 (182 aa).

Transmembrane regions (helical) follow at residues 6 to 26 (LIFVLQIIYVPILTIRTILLV), 32 to 52 (SAAGVGLLEGAIYIVSLGIVF), and 58 to 78 (WMNIVAYVIGFSAGLLLGGYI).

Belongs to the UPF0316 family.

Its subcellular location is the cell membrane. In Bacillus cereus (strain B4264), this protein is UPF0316 protein BCB4264_A3368.